Reading from the N-terminus, the 33-residue chain is Brevinin-2 (33 aa).

Cys27 and Cys33 form a disulfide bridge.

It belongs to the frog skin active peptide (FSAP) family. Brevinin subfamily. As to expression, expressed by the skin glands.

Its subcellular location is the secreted. Functionally, shows antibacterial activity against representative Gram-negative and Gram-positive bacterial species, and a very high hemolytic activity. This Pelophylax porosus brevipodus (Nagoya Daruma pond frog) protein is Brevinin-2.